Reading from the N-terminus, the 463-residue chain is T-box transcription factor TBX1-A (463 aa).

2 disordered regions span residues 39 to 58 (SPSP…PCSA) and 75 to 104 (GASS…VKKN). Residues 75 to 96 (GASSSSCASSTPGSGSTGSSSS) show a composition bias toward low complexity. The T-box DNA-binding region spans 119–297 (LWDEFNQLGT…SNPFAKGFRD (179 aa)). Disordered stretches follow at residues 320-354 (RSRN…PLHG) and 377-409 (VPLS…PYKY). Residues 323 to 332 (NPVSSPTQNG) are compositionally biased toward polar residues. A compositionally biased stretch (basic and acidic residues) spans 333–347 (SDKDGDGRREYERDA). A Nuclear localization signal motif is present at residues 420–431 (KTRPAPYPLPTI).

In terms of assembly, binds DNA as a dimer. Interacts with dscr6/ripply3.

The protein resides in the nucleus. In terms of biological role, probable transcriptional regulator involved in developmental processes. Binds to the palindromic T site 5'-TTCACACCTAGGTGTGAA-3' DNA sequence. Induces pre-placodal ectoderm (PPE) gene expression in regions where RIPPLY3 is absent. Plays a role in the formation of the anteroposterior (AP) axis during embryonic development; required to establish the posterolateral border of the pre-placodal ectoderm (PPE) acting downstream of the retinoic acid receptor (RAR) signaling. This Xenopus laevis (African clawed frog) protein is T-box transcription factor TBX1-A (tbx1-a).